We begin with the raw amino-acid sequence, 130 residues long: Peptide methionine sulfoxide reductase MsrB (130 aa).

Residues 1-122 (MKKREDMTEM…NSVSMAFEDS (122 aa)) enclose the MsrB domain. 4 residues coordinate Zn(2+): Cys39, Cys42, Cys88, and Cys91. Cys111 serves as the catalytic Nucleophile.

This sequence belongs to the MsrB Met sulfoxide reductase family. Requires Zn(2+) as cofactor.

It carries out the reaction L-methionyl-[protein] + [thioredoxin]-disulfide + H2O = L-methionyl-(R)-S-oxide-[protein] + [thioredoxin]-dithiol. The sequence is that of Peptide methionine sulfoxide reductase MsrB from Pasteurella multocida (strain Pm70).